The following is a 249-amino-acid chain: Methyl-coenzyme M reductase I subunit gamma (249 aa).

A coenzyme M-binding site is contributed by R120.

The protein belongs to the methyl-coenzyme M reductase gamma subunit family. In terms of assembly, MCR is a hexamer of two alpha, two beta, and two gamma chains, forming a dimer of heterotrimers. The cofactor is coenzyme F430.

It is found in the cytoplasm. It carries out the reaction coenzyme B + methyl-coenzyme M = methane + coenzyme M-coenzyme B heterodisulfide. The protein operates within one-carbon metabolism; methyl-coenzyme M reduction; methane from methyl-coenzyme M: step 1/1. Functionally, component of the methyl-coenzyme M reductase (MCR) I that catalyzes the reductive cleavage of methyl-coenzyme M (CoM-S-CH3 or 2-(methylthio)ethanesulfonate) using coenzyme B (CoB or 7-mercaptoheptanoylthreonine phosphate) as reductant which results in the production of methane and the mixed heterodisulfide of CoB and CoM (CoM-S-S-CoB). This is the final step in methanogenesis. This is Methyl-coenzyme M reductase I subunit gamma (mcrG) from Methanothermobacter thermautotrophicus (strain ATCC 29096 / DSM 1053 / JCM 10044 / NBRC 100330 / Delta H) (Methanobacterium thermoautotrophicum).